The chain runs to 252 residues: Hydrolase phiM (252 aa).

Ser-126 acts as the Charge relay system in catalysis.

Belongs to the LovG family.

The protein operates within secondary metabolite biosynthesis. In terms of biological role, hydrolase; part of the gene cluster that mediates the biosynthesis of the antihypercholesterolemic agents phomoidrides which are dimeric anhydrides. Within the pathway, phiM releases the C12-fatty acyl chain from phiA. The pathway begins with the highly reducing polyketide synthase tstA that catalyzes the formation of a C12-fatty acyl-ACP, starting from one acetate and 5 malonate units. The hydrolase tstM is involved in the release of the C12-fatty acyl chain from phiA. The alkylcitrate synthase (ACS) tstJ and the alkylcitrate dehydratase (ACDH) tstI then give rise to decarboxylated monomeric anhydrides by coupling the C12-fatty acyl chain with oxalacetic acid. The cyclase tstC is responsible for the dimerization of the monomeric anhydrides which leads to the production of prephomoidride that contains the characteristic bicyclo[4.3.1]deca-1,6-diene system of phomoidrides. Iterative oxidation catalyzed by the alpha-ketoglutarate-dependent dioxygenase tstK produced then phomoidride A. Finally, the methyltransferase tstE converts phomoidride A to phomoidride B via an acetalization reaction. The phosphatidylethanolamine-binding protein tstB and tstN are not essential for dimerization and their functions have still to be determined. In Talaromyces stipitatus (strain ATCC 10500 / CBS 375.48 / QM 6759 / NRRL 1006) (Penicillium stipitatum), this protein is Hydrolase phiM.